The following is a 142-amino-acid chain: Hemoglobin subunit pi (142 aa).

The Globin domain maps to 2–142; the sequence is ALTQAEKAAV…ISSVLTEKYR (141 aa). The heme b site is built by His59 and His88.

The protein belongs to the globin family.

Functionally, the pi' chain is the counterpart of the alpha chain in the major early embryonic hemoglobin P. The polypeptide is Hemoglobin subunit pi (Gallus gallus (Chicken)).